A 331-amino-acid chain; its full sequence is tRNA (guanine-N(1)-)-methyltransferase (331 aa).

Low complexity-rich tracts occupy residues 77–99 (GSDT…QATR) and 107–134 (AQPG…GRAA). Residues 77 to 137 (GSDTTARSGS…PGAGRAASSR (61 aa)) form a disordered region. Residues Gly169 and 193–198 (LGDYVL) contribute to the S-adenosyl-L-methionine site. The interval 312–331 (WQRCSPAPSEQAPEGARDMA) is disordered.

Belongs to the RNA methyltransferase TrmD family. Homodimer.

It localises to the cytoplasm. The catalysed reaction is guanosine(37) in tRNA + S-adenosyl-L-methionine = N(1)-methylguanosine(37) in tRNA + S-adenosyl-L-homocysteine + H(+). Functionally, specifically methylates guanosine-37 in various tRNAs. The polypeptide is tRNA (guanine-N(1)-)-methyltransferase (Kocuria rhizophila (strain ATCC 9341 / DSM 348 / NBRC 103217 / DC2201)).